Here is a 121-residue protein sequence, read N- to C-terminus: Ribonuclease P protein component (121 aa).

The protein belongs to the RnpA family. Consists of a catalytic RNA component (M1 or rnpB) and a protein subunit.

The enzyme catalyses Endonucleolytic cleavage of RNA, removing 5'-extranucleotides from tRNA precursor.. In terms of biological role, RNaseP catalyzes the removal of the 5'-leader sequence from pre-tRNA to produce the mature 5'-terminus. It can also cleave other RNA substrates such as 4.5S RNA. The protein component plays an auxiliary but essential role in vivo by binding to the 5'-leader sequence and broadening the substrate specificity of the ribozyme. In Bifidobacterium adolescentis (strain ATCC 15703 / DSM 20083 / NCTC 11814 / E194a), this protein is Ribonuclease P protein component.